The chain runs to 339 residues: Phenylalanine--tRNA ligase alpha subunit (339 aa).

Glu253 serves as a coordination point for Mg(2+).

This sequence belongs to the class-II aminoacyl-tRNA synthetase family. Phe-tRNA synthetase alpha subunit type 1 subfamily. In terms of assembly, tetramer of two alpha and two beta subunits. Requires Mg(2+) as cofactor.

It localises to the cytoplasm. It catalyses the reaction tRNA(Phe) + L-phenylalanine + ATP = L-phenylalanyl-tRNA(Phe) + AMP + diphosphate + H(+). The sequence is that of Phenylalanine--tRNA ligase alpha subunit from Geobacter sulfurreducens (strain ATCC 51573 / DSM 12127 / PCA).